The sequence spans 329 residues: 3-isopropylmalate dehydrogenase (329 aa).

Residues Arg-83, Arg-93, Arg-114, and Asp-200 each contribute to the substrate site. Asp-200, Asp-224, and Asp-228 together coordinate Mg(2+). Residue 257-269 (GSAPQIAGKNIAN) participates in NAD(+) binding.

It belongs to the isocitrate and isopropylmalate dehydrogenases family. Homotetramer. Mg(2+) is required as a cofactor. The cofactor is Mn(2+).

The protein localises to the cytoplasm. The catalysed reaction is (2R,3S)-3-isopropylmalate + NAD(+) = 4-methyl-2-oxopentanoate + CO2 + NADH. It participates in amino-acid biosynthesis; L-leucine biosynthesis; L-leucine from 3-methyl-2-oxobutanoate: step 3/4. In terms of biological role, catalyzes the oxidation of 3-carboxy-2-hydroxy-4-methylpentanoate (3-isopropylmalate) to 3-carboxy-4-methyl-2-oxopentanoate. The product decarboxylates to 4-methyl-2 oxopentanoate. The sequence is that of 3-isopropylmalate dehydrogenase (leuB) from Methanothermobacter thermautotrophicus (strain ATCC 29096 / DSM 1053 / JCM 10044 / NBRC 100330 / Delta H) (Methanobacterium thermoautotrophicum).